The sequence spans 483 residues: Ribulose bisphosphate carboxylase large chain (483 aa).

A propeptide spanning residues 1–2 (MS) is cleaved from the precursor. Positions 123 and 173 each coordinate substrate. The active-site Proton acceptor is Lys-175. Substrate is bound at residue Lys-177. Residues Lys-201, Asp-203, and Glu-204 each contribute to the Mg(2+) site. Lys-201 carries the post-translational modification N6-carboxylysine. Ser-208 bears the Phosphoserine mark. His-294 serves as the catalytic Proton acceptor. Residues Arg-295 and His-327 each coordinate substrate. The residue at position 330 (Thr-330) is a Phosphothreonine. Ser-379 is a substrate binding site.

Belongs to the RuBisCO large chain family. Type I subfamily. Heterohexadecamer of 8 large chains and 8 small chains; disulfide-linked. The disulfide link is formed within the large subunit homodimers. It depends on Mg(2+) as a cofactor. Post-translationally, the disulfide bond which can form in the large chain dimeric partners within the hexadecamer appears to be associated with oxidative stress and protein turnover.

Its subcellular location is the plastid. It is found in the chloroplast. The catalysed reaction is 2 (2R)-3-phosphoglycerate + 2 H(+) = D-ribulose 1,5-bisphosphate + CO2 + H2O. The enzyme catalyses D-ribulose 1,5-bisphosphate + O2 = 2-phosphoglycolate + (2R)-3-phosphoglycerate + 2 H(+). Its function is as follows. RuBisCO catalyzes two reactions: the carboxylation of D-ribulose 1,5-bisphosphate, the primary event in carbon dioxide fixation, as well as the oxidative fragmentation of the pentose substrate in the photorespiration process. Both reactions occur simultaneously and in competition at the same active site. The polypeptide is Ribulose bisphosphate carboxylase large chain (Aethionema cordifolium (Lebanon stonecress)).